The chain runs to 201 residues: Peptidyl-tRNA hydrolase (201 aa).

Tyrosine 15 is a binding site for tRNA. The active-site Proton acceptor is the histidine 20. TRNA is bound by residues tyrosine 66, asparagine 68, and asparagine 114.

This sequence belongs to the PTH family. Monomer.

It localises to the cytoplasm. It carries out the reaction an N-acyl-L-alpha-aminoacyl-tRNA + H2O = an N-acyl-L-amino acid + a tRNA + H(+). Hydrolyzes ribosome-free peptidyl-tRNAs (with 1 or more amino acids incorporated), which drop off the ribosome during protein synthesis, or as a result of ribosome stalling. Its function is as follows. Catalyzes the release of premature peptidyl moieties from peptidyl-tRNA molecules trapped in stalled 50S ribosomal subunits, and thus maintains levels of free tRNAs and 50S ribosomes. The polypeptide is Peptidyl-tRNA hydrolase (Burkholderia thailandensis (strain ATCC 700388 / DSM 13276 / CCUG 48851 / CIP 106301 / E264)).